The chain runs to 34 residues: Non-cysteinic peptide Bs 10 (34 aa).

Residues Val-1–Gly-34 form a disordered region. The span at Ile-14–Arg-23 shows a compositional bias: basic residues. Positions Lys-24–Gly-34 are enriched in basic and acidic residues.

As to expression, expressed by the venom gland.

The protein localises to the secreted. This is Non-cysteinic peptide Bs 10 from Hottentotta tamulus sindicus (Scorpion).